We begin with the raw amino-acid sequence, 397 residues long: UDP-GlcNAc:betaGal beta-1,3-N-acetylglucosaminyltransferase 8 (397 aa).

The Cytoplasmic portion of the chain corresponds to 1 to 6 (MRCPKC). Residues 7–23 (LLCLSALLTLLGLKVYI) traverse the membrane as a helical; Signal-anchor for type II membrane protein segment. Over 24-397 (EWTSESRLSK…KQLQDPRLQC (374 aa)) the chain is Lumenal. Residues 33 to 58 (KAYPSPRGTPPSPTPANPEPTLPANL) are disordered. Over residues 39-53 (RGTPPSPTPANPEPT) the composition is skewed to pro residues. Residue asparagine 57 is glycosylated (N-linked (GlcNAc...) asparagine).

Belongs to the glycosyltransferase 31 family. As to quaternary structure, interacts with B3GNT2; this interaction greatly increases B3GNT2 catalytic activity, independently of B3GNT8 enzymatic activity. Highly expressed in small intestine, pancreas, spleen, bone marrow, lung, throat, and ileum, and weakly in fetal brain, cerebellum, heart, liver, tongue, breast, uteri, and testis. Not detected in colon. Differentially expressed in human tumor cell lines.

It localises to the golgi apparatus membrane. Its pathway is protein modification; protein glycosylation. In terms of biological role, beta-1,3-N-acetylglucosaminyltransferase that plays a role in the elongation of specific branch structures of multiantennary N-glycans. Has strong activity towards tetraantennary N-glycans and 2,6 triantennary glycans. The protein is UDP-GlcNAc:betaGal beta-1,3-N-acetylglucosaminyltransferase 8 of Homo sapiens (Human).